A 366-amino-acid chain; its full sequence is Glutamate 5-kinase (366 aa).

Lysine 17 contributes to the ATP binding site. Substrate-binding residues include serine 57, aspartate 144, and asparagine 156. Residues 176–177 and 216–222 contribute to the ATP site; these read SD and TGGMASK. Residues 278–352 form the PUA domain; that stretch reads RGALVLDDGA…GRSTTELPDT (75 aa).

The protein belongs to the glutamate 5-kinase family.

The protein resides in the cytoplasm. The catalysed reaction is L-glutamate + ATP = L-glutamyl 5-phosphate + ADP. It participates in amino-acid biosynthesis; L-proline biosynthesis; L-glutamate 5-semialdehyde from L-glutamate: step 1/2. Catalyzes the transfer of a phosphate group to glutamate to form L-glutamate 5-phosphate. This Nocardia farcinica (strain IFM 10152) protein is Glutamate 5-kinase.